A 204-amino-acid chain; its full sequence is Large ribosomal subunit protein uL13 (204 aa).

This sequence belongs to the universal ribosomal protein uL13 family.

This is Large ribosomal subunit protein uL13 (RpL13A) from Choristoneura parallela (Spotted fireworm moth).